The following is a 250-amino-acid chain: Triosephosphate isomerase (250 aa).

Residue 9–11 participates in substrate binding; that stretch reads NWK. Histidine 96 acts as the Electrophile in catalysis. Residue glutamate 166 is the Proton acceptor of the active site. Substrate-binding positions include glycine 172, serine 212, and 233 to 234; that span reads GG.

Belongs to the triosephosphate isomerase family. As to quaternary structure, homodimer.

The protein localises to the cytoplasm. The catalysed reaction is D-glyceraldehyde 3-phosphate = dihydroxyacetone phosphate. It participates in carbohydrate biosynthesis; gluconeogenesis. The protein operates within carbohydrate degradation; glycolysis; D-glyceraldehyde 3-phosphate from glycerone phosphate: step 1/1. Involved in the gluconeogenesis. Catalyzes stereospecifically the conversion of dihydroxyacetone phosphate (DHAP) to D-glyceraldehyde-3-phosphate (G3P). The protein is Triosephosphate isomerase of Chlorobium phaeobacteroides (strain BS1).